We begin with the raw amino-acid sequence, 337 residues long: Anthranilate phosphoribosyltransferase (337 aa).

Residues G81, 84-85 (GD), S89, 91-94 (NVST), 109-117 (KHGNRAATS), and A121 each bind 5-phospho-alpha-D-ribose 1-diphosphate. G81 serves as a coordination point for anthranilate. S93 is a Mg(2+) binding site. N112 provides a ligand contact to anthranilate. R167 is an anthranilate binding site. 2 residues coordinate Mg(2+): D226 and E227.

Belongs to the anthranilate phosphoribosyltransferase family. In terms of assembly, homodimer. Mg(2+) is required as a cofactor.

It carries out the reaction N-(5-phospho-beta-D-ribosyl)anthranilate + diphosphate = 5-phospho-alpha-D-ribose 1-diphosphate + anthranilate. Its pathway is amino-acid biosynthesis; L-tryptophan biosynthesis; L-tryptophan from chorismate: step 2/5. Functionally, catalyzes the transfer of the phosphoribosyl group of 5-phosphorylribose-1-pyrophosphate (PRPP) to anthranilate to yield N-(5'-phosphoribosyl)-anthranilate (PRA). The sequence is that of Anthranilate phosphoribosyltransferase from Methylorubrum extorquens (strain PA1) (Methylobacterium extorquens).